We begin with the raw amino-acid sequence, 556 residues long: Thermosome subunit beta (556 aa).

The tract at residues 530–556 is disordered; sequence LSTDKGDDDGGAGGMGGGMGGGMGGMM. A compositionally biased stretch (gly residues) spans 540–556; that stretch reads GAGGMGGGMGGGMGGMM.

The protein belongs to the TCP-1 chaperonin family. Forms an oligomeric complex of eight-membered rings.

In terms of biological role, molecular chaperone; binds unfolded polypeptides in vitro, and has a weak ATPase activity. This Halobacterium salinarum (strain ATCC 700922 / JCM 11081 / NRC-1) (Halobacterium halobium) protein is Thermosome subunit beta (thsB).